Here is a 395-residue protein sequence, read N- to C-terminus: Chalcone synthase 7 (395 aa).

Residue C169 is part of the active site.

This sequence belongs to the thiolase-like superfamily. Chalcone/stilbene synthases family.

The enzyme catalyses (E)-4-coumaroyl-CoA + 3 malonyl-CoA + 3 H(+) = 2',4,4',6'-tetrahydroxychalcone + 3 CO2 + 4 CoA. Its pathway is secondary metabolite biosynthesis; flavonoid biosynthesis. Functionally, the primary product of this enzyme is 4,2',4',6'-tetrahydroxychalcone (also termed naringenin-chalcone or chalcone) which can under specific conditions spontaneously isomerize into naringenin. The protein is Chalcone synthase 7 (CSF7) of Picea mariana (Black spruce).